The sequence spans 330 residues: Lipoyl synthase (330 aa).

Residues Cys77, Cys82, Cys88, Cys103, Cys107, Cys110, and Ser317 each coordinate [4Fe-4S] cluster. Residues 89–306 (FNHGTATFMI…RSEAERMGFE (218 aa)) form the Radical SAM core domain.

Belongs to the radical SAM superfamily. Lipoyl synthase family. Requires [4Fe-4S] cluster as cofactor.

The protein resides in the cytoplasm. It carries out the reaction [[Fe-S] cluster scaffold protein carrying a second [4Fe-4S](2+) cluster] + N(6)-octanoyl-L-lysyl-[protein] + 2 oxidized [2Fe-2S]-[ferredoxin] + 2 S-adenosyl-L-methionine + 4 H(+) = [[Fe-S] cluster scaffold protein] + N(6)-[(R)-dihydrolipoyl]-L-lysyl-[protein] + 4 Fe(3+) + 2 hydrogen sulfide + 2 5'-deoxyadenosine + 2 L-methionine + 2 reduced [2Fe-2S]-[ferredoxin]. It functions in the pathway protein modification; protein lipoylation via endogenous pathway; protein N(6)-(lipoyl)lysine from octanoyl-[acyl-carrier-protein]: step 2/2. Catalyzes the radical-mediated insertion of two sulfur atoms into the C-6 and C-8 positions of the octanoyl moiety bound to the lipoyl domains of lipoate-dependent enzymes, thereby converting the octanoylated domains into lipoylated derivatives. In Actinobacillus pleuropneumoniae serotype 5b (strain L20), this protein is Lipoyl synthase.